We begin with the raw amino-acid sequence, 152 residues long: Plant UBX domain-containing protein 12 (152 aa).

The disordered stretch occupies residues 32-61 (KRFSEEESEETENTTNSSNAVFGFPNLPEE). The region spanning 67 to 150 (DQSVLCRICV…GLANSLVSVT (84 aa)) is the UBX domain.

This is Plant UBX domain-containing protein 12 from Arabidopsis thaliana (Mouse-ear cress).